Consider the following 241-residue polypeptide: Probable FKBP-type peptidyl-prolyl cis-trans isomerase (241 aa).

The PPIase FKBP-type domain occupies Thr150–Lys241.

It belongs to the FKBP-type PPIase family.

It carries out the reaction [protein]-peptidylproline (omega=180) = [protein]-peptidylproline (omega=0). Functionally, PPIases accelerate the folding of proteins. It catalyzes the cis-trans isomerization of proline imidic peptide bonds in oligopeptides. The protein is Probable FKBP-type peptidyl-prolyl cis-trans isomerase of Haemophilus influenzae (strain ATCC 51907 / DSM 11121 / KW20 / Rd).